A 212-amino-acid chain; its full sequence is Thymidylate kinase (212 aa).

11 to 18 is an ATP binding site; it reads GPEGAGKT.

This sequence belongs to the thymidylate kinase family.

The enzyme catalyses dTMP + ATP = dTDP + ADP. Functionally, phosphorylation of dTMP to form dTDP in both de novo and salvage pathways of dTTP synthesis. This chain is Thymidylate kinase, found in Streptococcus pneumoniae (strain ATCC 700669 / Spain 23F-1).